Here is a 387-residue protein sequence, read N- to C-terminus: Probable purine permease 6 (387 aa).

The tract at residues 1–24 is disordered; it reads MMELESETQELHLHVNGEPEGKFS. The segment covering 9-24 has biased composition (basic and acidic residues); it reads QELHLHVNGEPEGKFS. The next 10 helical transmembrane spans lie at 36 to 56, 68 to 88, 106 to 126, 129 to 149, 162 to 182, 201 to 221, 238 to 258, 283 to 303, 309 to 329, and 333 to 353; these read LRVS…TLLG, WLET…YYYL, FLTL…HCIL, FGLL…QLAF, ITPF…LLVI, YVIG…VLSL, ILDM…VGLF, INIG…GLII, FSNV…VVFF, and MSGI…SYGY. The segment at 362 to 387 is disordered; that stretch reads PEEDQELPQSKEEEEQKQVDTIHVQA. Residues 370-381 are compositionally biased toward basic and acidic residues; it reads QSKEEEEQKQVD.

Belongs to the purine permeases (TC 2.A.7.14) family.

The protein resides in the membrane. This chain is Probable purine permease 6 (PUP6), found in Arabidopsis thaliana (Mouse-ear cress).